We begin with the raw amino-acid sequence, 236 residues long: Outer membrane protein P.III (236 aa).

An N-terminal signal peptide occupies residues 1–22 (MTKQLKLSALFVALLASGTAVA). Tandem repeats lie at residues 69-70 (VP), 71-72 (EP), 73-74 (EP), and 75-76 (AP). A 4 X 2 AA tandem repeats of X-P region spans residues 69–76 (VPEPEPAP). One can recognise an OmpA-like domain in the interval 86-223 (YVDETISLSA…RVDVKIRSIV (138 aa)). A disulfide bond links Cys185 and Cys208.

Belongs to the outer membrane OOP (TC 1.B.6) superfamily.

Its subcellular location is the cell outer membrane. This Neisseria gonorrhoeae protein is Outer membrane protein P.III.